The primary structure comprises 213 residues: Probable thymidylate kinase 2 (213 aa).

Residue 10-17 (GIDGSGKS) participates in ATP binding.

It belongs to the thymidylate kinase family.

The catalysed reaction is dTMP + ATP = dTDP + ADP. The sequence is that of Probable thymidylate kinase 2 (tmk2) from Saccharolobus solfataricus (strain ATCC 35092 / DSM 1617 / JCM 11322 / P2) (Sulfolobus solfataricus).